The following is a 182-amino-acid chain: MISSTMAARVVDPYAEALVSLASAQGLLDTFEADIRFIAAVVQATPELGQFLASPLVKAEAKKNLLQQVFADQIHPLLLNALKLLSDRRRIMFLGAVCQRFLELQRKLKNIVLAEVTTAVPLTEAQQQSIRERVRDFTQASGVELQTSQDPTLLGGVIIKIGSQVIDLSLRGQLRRLALQLA.

The protein belongs to the ATPase delta chain family. In terms of assembly, F-type ATPases have 2 components, F(1) - the catalytic core - and F(0) - the membrane proton channel. F(1) has five subunits: alpha(3), beta(3), gamma(1), delta(1), epsilon(1). CF(0) has four main subunits: a(1), b(1), b'(1) and c(10-14). The alpha and beta chains form an alternating ring which encloses part of the gamma chain. F(1) is attached to F(0) by a central stalk formed by the gamma and epsilon chains, while a peripheral stalk is formed by the delta, b and b' chains.

Its subcellular location is the cellular thylakoid membrane. Its function is as follows. F(1)F(0) ATP synthase produces ATP from ADP in the presence of a proton or sodium gradient. F-type ATPases consist of two structural domains, F(1) containing the extramembraneous catalytic core and F(0) containing the membrane proton channel, linked together by a central stalk and a peripheral stalk. During catalysis, ATP synthesis in the catalytic domain of F(1) is coupled via a rotary mechanism of the central stalk subunits to proton translocation. Functionally, this protein is part of the stalk that links CF(0) to CF(1). It either transmits conformational changes from CF(0) to CF(1) or is implicated in proton conduction. The chain is ATP synthase subunit delta from Synechococcus sp. (strain JA-3-3Ab) (Cyanobacteria bacterium Yellowstone A-Prime).